The primary structure comprises 172 residues: MSVNMDELRHQVMINQFVLTAGCAADQAKQLLQAAHWQFETALSSFFQEANIPSHHQMMCTPRNTPATPPNFPDAITMFSKLRASECPGGGVSAGGGSSAQVSMACSPPHASFWASPPPNQQPVWLPPSSPTGHHTLHHHHHHMHPPPSWPPVSQPANGPQTPVISALHGQR.

Residues 118–130 are compositionally biased toward pro residues; it reads PPNQQPVWLPPSS. The tract at residues 118 to 172 is disordered; the sequence is PPNQQPVWLPPSSPTGHHTLHHHHHHMHPPPSWPPVSQPANGPQTPVISALHGQR. Residues 135 to 145 are compositionally biased toward basic residues; it reads HTLHHHHHHMH.

The protein belongs to the UBALD family.

This Danio rerio (Zebrafish) protein is UBA-like domain-containing protein 2 (ubald2).